Here is a 138-residue protein sequence, read N- to C-terminus: Probable lactoylglutathione lyase (138 aa).

Positions 5–129 (RILHTMLRVG…DGYMIELIQN (125 aa)) constitute a VOC domain. His-8 serves as a coordination point for Ni(2+). Arg-12 is a binding site for substrate. A Ni(2+)-binding site is contributed by Glu-59. Positions 63 and 77 each coordinate substrate. Ni(2+) contacts are provided by His-77 and Glu-125. Glu-125 (proton donor/acceptor) is an active-site residue.

The protein belongs to the glyoxalase I family. It depends on Ni(2+) as a cofactor.

It carries out the reaction (R)-S-lactoylglutathione = methylglyoxal + glutathione. It functions in the pathway secondary metabolite metabolism; methylglyoxal degradation; (R)-lactate from methylglyoxal: step 1/2. Functionally, catalyzes the conversion of hemimercaptal, formed from methylglyoxal and glutathione, to S-lactoylglutathione. The sequence is that of Probable lactoylglutathione lyase (gloA) from Vibrio parahaemolyticus serotype O3:K6 (strain RIMD 2210633).